The chain runs to 119 residues: Ribosome-binding factor A (119 aa).

This sequence belongs to the RbfA family. Monomer. Binds 30S ribosomal subunits, but not 50S ribosomal subunits or 70S ribosomes.

The protein localises to the cytoplasm. Its function is as follows. One of several proteins that assist in the late maturation steps of the functional core of the 30S ribosomal subunit. Associates with free 30S ribosomal subunits (but not with 30S subunits that are part of 70S ribosomes or polysomes). Required for efficient processing of 16S rRNA. May interact with the 5'-terminal helix region of 16S rRNA. The sequence is that of Ribosome-binding factor A from Pelodictyon phaeoclathratiforme (strain DSM 5477 / BU-1).